Here is a 584-residue protein sequence, read N- to C-terminus: Ras-specific guanine nucleotide-releasing factor RalGPS1 (584 aa).

The segment covering 1–13 (MDLMNGQSSSVNI) has biased composition (polar residues). 3 disordered regions span residues 1–29 (MDLM…SLSD), 285–338 (IEPG…IPHG), and 380–407 (HVPS…SELS). Residues 14 to 26 (AATASEKSSSSES) show a composition bias toward low complexity. The region spanning 50–288 (TPEEYAGQIT…YKLSLKIEPG (239 aa)) is the Ras-GEF domain. The PXXP signature appears at 326-329 (PTPP). The span at 388-404 (ESSTLSSGISIGSSDGS) shows a compositional bias: low complexity. Positions 458 to 570 (AVTIQGVLRR…WFKHLSAACQ (113 aa)) constitute a PH domain.

Its subcellular location is the cytoplasm. The protein resides in the cell membrane. Its function is as follows. Guanine nucleotide exchange factor. May be involved in cytoskeletal organization. This chain is Ras-specific guanine nucleotide-releasing factor RalGPS1 (RALGPS1), found in Gallus gallus (Chicken).